We begin with the raw amino-acid sequence, 198 residues long: TM2 domain-containing protein 2 (198 aa).

The first 27 residues, 1–27 (MRWPVPPLGYLLLGGQGLLLTFSLISS), serve as a signal peptide directing secretion. At 28–128 (QNNTSPVTYP…FLRGNRPCIK (101 aa)) the chain is on the extracellular side. N-linked (GlcNAc...) asparagine glycosylation is found at Asn-29, Asn-40, and Asn-76. The helical transmembrane segment at 129–149 (YTGHYFITTLLYSFFLGCFGV) threads the bilayer. The TM2 domain maps to 131 to 179 (GHYFITTLLYSFFLGCFGVDRFCLGHTGTAVGKLLTWGGLGIWWFVDLI). Topologically, residues 150-166 (DRFCLGHTGTAVGKLLT) are cytoplasmic. Residues 167–187 (WGGLGIWWFVDLILLITGGLM) traverse the membrane as a helical segment. The Extracellular portion of the chain corresponds to 188-198 (PSDNSNWCTIY).

This sequence belongs to the TM2 family.

Its subcellular location is the membrane. In Xenopus laevis (African clawed frog), this protein is TM2 domain-containing protein 2 (tm2d2).